A 292-amino-acid polypeptide reads, in one-letter code: Protein/nucleic acid deglycase HchA (292 aa).

Over residues 1 to 12 (MSQDVNELSKQP) the composition is skewed to polar residues. The tract at residues 1–23 (MSQDVNELSKQPTPDKAEDNAFF) is disordered. Cys-190 acts as the Nucleophile in catalysis.

This sequence belongs to the peptidase C56 family. HchA subfamily.

Its subcellular location is the cytoplasm. It carries out the reaction N(omega)-(1-hydroxy-2-oxopropyl)-L-arginyl-[protein] + H2O = lactate + L-arginyl-[protein] + H(+). It catalyses the reaction N(6)-(1-hydroxy-2-oxopropyl)-L-lysyl-[protein] + H2O = lactate + L-lysyl-[protein] + H(+). The catalysed reaction is S-(1-hydroxy-2-oxopropyl)-L-cysteinyl-[protein] + H2O = lactate + L-cysteinyl-[protein] + H(+). The enzyme catalyses N(omega)-(1-hydroxy-2-oxoethyl)-L-arginyl-[protein] + H2O = L-arginyl-[protein] + glycolate + H(+). It carries out the reaction N(6)-(1-hydroxy-2-oxoethyl)-L-lysyl-[protein] + H2O = glycolate + L-lysyl-[protein] + H(+). It catalyses the reaction S-(1-hydroxy-2-oxoethyl)-L-cysteinyl-[protein] + H2O = glycolate + L-cysteinyl-[protein] + H(+). The catalysed reaction is N(2)-(1-hydroxy-2-oxopropyl)-dGTP + H2O = lactate + dGTP + H(+). The enzyme catalyses N(2)-(1-hydroxy-2-oxopropyl)-GTP + H2O = lactate + GTP + H(+). It carries out the reaction N(2)-(1-hydroxy-2-oxopropyl)-GDP + H2O = lactate + GDP + H(+). It catalyses the reaction N(2)-(1-hydroxy-2-oxopropyl)-GMP + H2O = lactate + GMP + H(+). The catalysed reaction is N(2)-(1-hydroxy-2-oxoethyl)-dGTP + H2O = dGTP + glycolate + H(+). The enzyme catalyses N(2)-(1-hydroxy-2-oxoethyl)-GTP + H2O = glycolate + GTP + H(+). It carries out the reaction N(2)-(1-hydroxy-2-oxoethyl)-GDP + H2O = glycolate + GDP + H(+). It catalyses the reaction N(2)-(1-hydroxy-2-oxoethyl)-GMP + H2O = glycolate + GMP + H(+). The catalysed reaction is an N(2)-(1-hydroxy-2-oxopropyl)-guanosine in RNA + H2O = a guanosine in RNA + lactate + H(+). The enzyme catalyses an N(2)-(1-hydroxy-2-oxopropyl)-2'-deoxyguanosine in DNA + H2O = a 2'-deoxyguanosine in DNA + lactate + H(+). It carries out the reaction an N(2)-(1-hydroxy-2-oxoethyl)-guanosine in RNA + H2O = a guanosine in RNA + glycolate + H(+). It catalyses the reaction an N(2)-(1-hydroxy-2-oxoethyl)-2'-deoxyguanosine in DNA + H2O = a 2'-deoxyguanosine in DNA + glycolate + H(+). Its function is as follows. Protein and nucleotide deglycase that catalyzes the deglycation of the Maillard adducts formed between amino groups of proteins or nucleotides and reactive carbonyl groups of glyoxals. Thus, functions as a protein deglycase that repairs methylglyoxal- and glyoxal-glycated proteins, and releases repaired proteins and lactate or glycolate, respectively. Deglycates cysteine, arginine and lysine residues in proteins, and thus reactivates these proteins by reversing glycation by glyoxals. Acts on early glycation intermediates (hemithioacetals and aminocarbinols), preventing the formation of Schiff bases and advanced glycation endproducts (AGE). Also functions as a nucleotide deglycase able to repair glycated guanine in the free nucleotide pool (GTP, GDP, GMP, dGTP) and in DNA and RNA. Is thus involved in a major nucleotide repair system named guanine glycation repair (GG repair), dedicated to reversing methylglyoxal and glyoxal damage via nucleotide sanitization and direct nucleic acid repair. Plays an important role in protecting cells from carbonyl stress. The chain is Protein/nucleic acid deglycase HchA from Staphylococcus aureus (strain bovine RF122 / ET3-1).